The sequence spans 115 residues: Macroconotoxin Mu8.1 (115 aa).

Residues 1 to 21 (MDMKMTFSGLVLVVLVTTVVG) form the signal peptide. A propeptide spanning residues 22–26 (SSVRR) is cleaved from the precursor. 5 disulfide bridges follow: Cys36–Cys77, Cys44–Cys60, Cys48–Cys56, Cys83–Cys115, and Cys87–Cys97. Glu40 is a Zn(2+) binding site. Residue His68 coordinates Zn(2+).

Mostly found as a homodimer in solution; non-covalently bound. As to expression, expressed by the venom duct.

The protein localises to the secreted. In terms of biological role, modestly and reversibly inhibits Cav2.3/CACNA1E (IC(50)=5.8 uM) recombinantly expressed in HEK293 cells without affecting the voltage dependence of activation. In mouse DRG sensory neurons, modulates depolarization-induced calcium influx. The sequence is that of Macroconotoxin Mu8.1 from Conus mucronatus (Pointed cone).